The primary structure comprises 305 residues: Short-chain dehydrogenase/reductase VdtF (305 aa).

NADP(+) contacts are provided by leucine 28 and asparagine 98. The active-site Proton donor is the serine 192. NADP(+)-binding residues include tyrosine 206, lysine 210, and threonine 241. The Proton acceptor role is filled by tyrosine 206. Lysine 210 (lowers pKa of active site Tyr) is an active-site residue.

Belongs to the short-chain dehydrogenases/reductases (SDR) family.

It carries out the reaction methyl 2-[(3S)-9,10-dihydroxy-7-methoxy-1-oxo-1H,3H,4H-naphtho[2,3-c]pyran-3-yl]acetate + AH2 = semiviriditoxin + A. It catalyses the reaction 9,10-dihydroxy-7-methoxy-3-(2-oxopropyl)-1H-benzo[g]isochromen-1-one + AH2 = (3S)-9,10-dihydroxy-7-methoxy-3-(2-oxopropyl)-1H,3H,4H-naphtho[2,3-c]pyran-1-one + A. It participates in secondary metabolite biosynthesis. Functionally, short-chain dehydrogenase/reductase; part of the gene cluster that mediates the biosynthesis of viriditoxin, one of the 'classical' secondary metabolites produced by fungi and that has antibacterial activity. The first step is performed by the polyketide synthase VdtA which condenses one acetyl-CoA and 6 malonyl-CoA units to form the heptaketide monomer backbone of viriditoxin. The product of VdtA is then O-methylated on C7 by the O-methyltransferase VdtC. The O-methyl group is important for the stereoselective coupling of the monomers at the final step of viriditoxin biosynthesis. The short-chain dehydrogenase/reductase VdtF then acts as a stereospecific reductase converting the pyrone to dihydropyrone via the reduction of the C3-C4 double bond. The FAD-binding monooxygenase VdtE then converts the ketone group into a methyl-ester group to yield semi-viriditoxin. Finally, the laccase VdtB is involved in dimerization of 2 semi-viriditoxin molecules to yield the final viriditoxin. VdtB is responsible for the regioselective 6,6'-coupling of semi-viriditoxin, which yields (M)-viriditoxin and (P)-viriditoxin at a ratio of 1:2. The non-catalytic carboxylesterase-like protein VdtD affects the stereochemistical outcome of the coupling. The highly reducing polyketide synthase VdtX is not involved in viriditoxin synthesis, but might possibly play a role in the production of additional metabolites not identified yet. This is Short-chain dehydrogenase/reductase VdtF from Byssochlamys spectabilis (Paecilomyces variotii).